Consider the following 208-residue polypeptide: Uracil phosphoribosyltransferase (208 aa).

5-phospho-alpha-D-ribose 1-diphosphate is bound by residues Arg78, Arg103, and 130 to 138 (DPMLATGGS). Residues Ile193 and 198–200 (GDA) contribute to the uracil site. Position 199 (Asp199) interacts with 5-phospho-alpha-D-ribose 1-diphosphate.

The protein belongs to the UPRTase family. Mg(2+) is required as a cofactor.

It catalyses the reaction UMP + diphosphate = 5-phospho-alpha-D-ribose 1-diphosphate + uracil. The protein operates within pyrimidine metabolism; UMP biosynthesis via salvage pathway; UMP from uracil: step 1/1. With respect to regulation, allosterically activated by GTP. Its function is as follows. Catalyzes the conversion of uracil and 5-phospho-alpha-D-ribose 1-diphosphate (PRPP) to UMP and diphosphate. This chain is Uracil phosphoribosyltransferase, found in Haemophilus influenzae (strain PittEE).